The sequence spans 652 residues: WD repeat-containing protein 70 (652 aa).

Disordered stretches follow at residues 1–22 (MERPGPSDGSDASGPDPQLAVT) and 45–171 (RRTA…IPDS). A compositionally biased stretch (basic and acidic residues) spans 45-76 (RRTAVERSRKTLEAREREEEMNREKELRRQNE). Residues 92 to 102 (SKSSSRDTSSS) show a composition bias toward low complexity. Composition is skewed to acidic residues over residues 103-115 (ESDESSDSSDDEL) and 146-162 (EDVEEEDDDDGDSEEEE). WD repeat units follow at residues 178-217 (HGTKTVSALGLDPSGARLVTGGYDYDVKFWDFAGMDASFK), 225-266 (CECH…ECIK), 279-319 (GHTA…KQKS), 328-367 (GKKVIPTTCTYSRDGSLIAAACQNGSIQIWDRNLTVHPKF), 374-413 (DPGTDTSCVTFSYDGTVLASRGGDDTLKLWDIRQFNKPLF), 419-464 (PTMF…RVYE), and 467-506 (ITDASVVRCLWHPKLNQIMVGTGNGLAKVYYDPNKSQRGA). Lys294 is covalently cross-linked (Glycyl lysine isopeptide (Lys-Gly) (interchain with G-Cter in SUMO2)). Lys450 is modified (N6-acetyllysine). The segment covering 538-563 (REPRQRSTRKQLEKDRLDPLKSHKPE) has biased composition (basic and acidic residues). Residues 538-577 (REPRQRSTRKQLEKDRLDPLKSHKPEPPVAGPGRGGRVGT) are disordered. Thr577 bears the Phosphothreonine mark. Residues Lys588 and Lys594 each participate in a glycyl lysine isopeptide (Lys-Gly) (interchain with G-Cter in SUMO2) cross-link. A phosphoserine mark is found at Ser619 and Ser636. The tract at residues 629–652 (TMFAQVESDDEETKNEPEWKKRKI) is disordered. Over residues 642–652 (KNEPEWKKRKI) the composition is skewed to basic and acidic residues.

Belongs to the WD repeat GAD-1 family.

The chain is WD repeat-containing protein 70 (WDR70) from Bos taurus (Bovine).